We begin with the raw amino-acid sequence, 575 residues long: V-type ATP synthase alpha chain (575 aa).

238–245 (GPFGAGKT) is a binding site for ATP.

Belongs to the ATPase alpha/beta chains family.

The enzyme catalyses ATP + H2O + 4 H(+)(in) = ADP + phosphate + 5 H(+)(out). Its function is as follows. Produces ATP from ADP in the presence of a proton gradient across the membrane. The V-type alpha chain is a catalytic subunit. The chain is V-type ATP synthase alpha chain (atpA) from Borreliella burgdorferi (strain ATCC 35210 / DSM 4680 / CIP 102532 / B31) (Borrelia burgdorferi).